The primary structure comprises 378 residues: Erythronate-4-phosphate dehydrogenase (378 aa).

Positions 45 and 66 each coordinate substrate. Asp-146 and Thr-175 together coordinate NAD(+). Arg-208 is an active-site residue. Asp-232 contributes to the NAD(+) binding site. Glu-237 is an active-site residue. The active-site Proton donor is His-254. Gly-257 serves as a coordination point for NAD(+). Residue Tyr-258 coordinates substrate.

The protein belongs to the D-isomer specific 2-hydroxyacid dehydrogenase family. PdxB subfamily. As to quaternary structure, homodimer.

It is found in the cytoplasm. The enzyme catalyses 4-phospho-D-erythronate + NAD(+) = (R)-3-hydroxy-2-oxo-4-phosphooxybutanoate + NADH + H(+). Its pathway is cofactor biosynthesis; pyridoxine 5'-phosphate biosynthesis; pyridoxine 5'-phosphate from D-erythrose 4-phosphate: step 2/5. Catalyzes the oxidation of erythronate-4-phosphate to 3-hydroxy-2-oxo-4-phosphonooxybutanoate. The protein is Erythronate-4-phosphate dehydrogenase of Klebsiella pneumoniae (strain 342).